The chain runs to 418 residues: Enolase (418 aa).

(2R)-2-phosphoglycerate is bound at residue glutamine 162. Glutamate 204 (proton donor) is an active-site residue. The Mg(2+) site is built by aspartate 241, glutamate 283, and aspartate 309. Residues lysine 334, arginine 363, serine 364, and lysine 385 each coordinate (2R)-2-phosphoglycerate. Lysine 334 serves as the catalytic Proton acceptor.

The protein belongs to the enolase family. Mg(2+) serves as cofactor.

The protein localises to the cytoplasm. It localises to the secreted. The protein resides in the cell surface. It carries out the reaction (2R)-2-phosphoglycerate = phosphoenolpyruvate + H2O. It participates in carbohydrate degradation; glycolysis; pyruvate from D-glyceraldehyde 3-phosphate: step 4/5. Functionally, catalyzes the reversible conversion of 2-phosphoglycerate (2-PG) into phosphoenolpyruvate (PEP). It is essential for the degradation of carbohydrates via glycolysis. This chain is Enolase, found in Pelagibacter ubique (strain HTCC1062).